The following is a 1023-amino-acid chain: DNA polymerase (1023 aa).

Positions 726-751 are disordered; that stretch reads QTDATRKHRQCTPTSNSSSDEDAPFY.

This sequence belongs to the DNA polymerase type-B family. As to quaternary structure, heterodimer with the terminal protein; this heterodimer binds to bp 9 to 18 of the genome. Forms a complex with viral pTP, DBP and hosts NFIA and POU2F1/OCT1 for initiation of replication.

Its subcellular location is the host nucleus. It catalyses the reaction DNA(n) + a 2'-deoxyribonucleoside 5'-triphosphate = DNA(n+1) + diphosphate. Its function is as follows. Eukaryotic-type DNA polymerase involved in viral genomic replication. DNA synthesis is protein primed, and acts in a strand displacement replication. Assembles in complex with viral pTP, DBP, host NFIA and host POU2F1/OCT1 on viral origin of replication. The polymerase covalently transfers dCMP onto pTP, thereby initiating complementary strand synthesis. This is DNA polymerase from Bovine adenovirus B serotype 3 (BAdV-3).